Here is a 409-residue protein sequence, read N- to C-terminus: Nucleoprotein (409 aa).

Disordered stretches follow at residues 1–32 (MASG…SSGN), 45–69 (NSHP…QQHG), 122–145 (DVKS…LRFS), 164–194 (RSGR…GSED), and 238–259 (VDQV…DKMN). Over residues 15-31 (PVIKLGGPKPPKVGSSG) the composition is skewed to low complexity. The tract at residues 29–160 (SSGNASWFQA…GNFRWDFIPL (132 aa)) is RNA-binding. The CoV N NTD domain maps to 31–156 (GNASWFQAIK…GGPDGNFRWD (126 aa)). Over residues 122-138 (DVKSRSHQGTRDPDKFD) the composition is skewed to basic and acidic residues. Residues 164–179 (RSGRSTAASSAASSRA) are compositionally biased toward low complexity. 2 stretches are compositionally biased toward basic and acidic residues: residues 180 to 192 (PSRD…RSGS) and 247 to 259 (KGKE…DKMN). Phosphoserine; by host occurs at positions 190 and 192. The CoV N CTD domain maps to 219 to 331 (ADEMAHRRYC…QCVDGVGTRP (113 aa)). A dimerization region spans residues 226 to 333 (RYCKRTIPPG…VDGVGTRPKD (108 aa)). The cysteines at positions 320 and 323 are disulfide-linked. Positions 326 to 409 (GVGTRPKDDE…GDSALGENEL (84 aa)) are disordered. Residues 341 to 357 (RSSSRPATRTSSPAPRQ) are compositionally biased toward low complexity. The segment covering 358-367 (QRPKKEKKPK) has biased composition (basic residues). Thr378 carries the phosphothreonine; by host modification. Ser379 is subject to Phosphoserine; by host.

It belongs to the gammacoronavirus nucleocapsid protein family. As to quaternary structure, homooligomer. Both monomeric and oligomeric forms interact with RNA. Interacts with protein M. Interacts with NSP3; this interaction serves to tether the genome to the newly translated replicase-transcriptase complex at a very early stage of infection. ADP-ribosylated. The ADP-ribosylation is retained in the virion during infection. Post-translationally, phosphorylated on serine and threonine residues.

It localises to the virion. The protein localises to the host endoplasmic reticulum-Golgi intermediate compartment. It is found in the host Golgi apparatus. In terms of biological role, packages the positive strand viral genome RNA into a helical ribonucleocapsid (RNP) and plays a fundamental role during virion assembly through its interactions with the viral genome and membrane protein M. Plays an important role in enhancing the efficiency of subgenomic viral RNA transcription as well as viral replication. The chain is Nucleoprotein from Avian infectious bronchitis virus (strain Arkansas 99) (IBV).